The following is a 502-amino-acid chain: MRNTSRVAILIVIVGVLLTLTHDYWGGKLLGIFSVLISCSVVFIAFVISLENRKPAQTIAWLAVLGSFPFLGFLFYLLFGRNYWQQRRFKKKAESDEAVLLKFQEPSPIAIERLPMAPHQRPLLHLAYRIGQHPVSLASQTAVLTNGEETFAAIFDELEKAQHHIHLEYYIVRHDEIGQKLKHVLMEKACQGVHVRFLYDAVGSWKLSNAYIEELRAAGVEMIPFSPVRLPFLSNQINFRNHRKIIVIDGGVGFVGGLNIGDEYLGKDEYFGFWRDTHLLIRGEAVRTLQLIFLQDWYYMTGERLLTPEYLSPPLIVEEGQGGVQLIAGGPDQKWEVIKQLYFAMITSAKRSIWVASPYFVPDEDILTALKVAALSGIDVRLLAPKRPDKKIVFYASRSYFPELLEAGVKIYEYEKGFLHSKVIVVDGELASIGTANMDMRSFHLNFEVNAFLYYTDSTNKLVNDFLEDFRHASPIDYVQFQQRPFRVRIVESVSRLLSPLL.

A run of 3 helical transmembrane segments spans residues 7-27 (VAILIVIVGVLLTLTHDYWGG), 29-49 (LLGIFSVLISCSVVFIAFVIS), and 59-79 (IAWLAVLGSFPFLGFLFYLLF). 2 PLD phosphodiesterase domains span residues 237-264 (INFRNHRKIIVIDGGVGFVGGLNIGDEY) and 415-442 (EKGFLHSKVIVVDGELASIGTANMDMRS). Catalysis depends on residues H242, K244, D249, H420, K422, and D427.

Belongs to the phospholipase D family. Cardiolipin synthase subfamily.

The protein localises to the cell membrane. The catalysed reaction is 2 a 1,2-diacyl-sn-glycero-3-phospho-(1'-sn-glycerol) = a cardiolipin + glycerol. Catalyzes the reversible phosphatidyl group transfer from one phosphatidylglycerol molecule to another to form cardiolipin (CL) (diphosphatidylglycerol) and glycerol. The sequence is that of Cardiolipin synthase (cls) from Geobacillus thermodenitrificans (strain NG80-2).